We begin with the raw amino-acid sequence, 353 residues long: Ubiquinol oxidase 1, mitochondrial (353 aa).

A mitochondrion-targeting transit peptide spans 1 to 69 (MMTRGATRMT…RHFPVMGSRS (69 aa)). The tract at residues 77-99 (DKQHDKKAENGSAAATGGGDGGD) is disordered. A helical membrane pass occupies residues 178–198 (AMMLETVAAVPGMVGGMLLHC). Residues E182, E221, and H224 each contribute to the Fe cation site. The helical transmembrane segment at 240 to 260 (ALVFAVQGVFFNAYFVTYLLS) threads the bilayer. Fe cation contacts are provided by E272, E323, and H326.

The protein belongs to the alternative oxidase family. In terms of assembly, homodimer; disulfide-linked. Fe cation serves as cofactor.

The protein resides in the mitochondrion inner membrane. The enzyme catalyses 2 a ubiquinol + O2 = 2 a ubiquinone + 2 H2O. With respect to regulation, stimulated by reduction of the disulfide bond and the presence of pyruvate. In terms of biological role, catalyzes the cyanide-resistant oxidation of ubiquinol and the reduction of molecular oxygen to water, but does not translocate protons and consequently is not linked to oxidative phosphorylation. May increase respiration when the cytochrome respiratory pathway is restricted, or in response to low temperatures. This Nicotiana tabacum (Common tobacco) protein is Ubiquinol oxidase 1, mitochondrial (AOX1).